A 135-amino-acid chain; its full sequence is Evasin P1134 (135 aa).

The N-terminal stretch at 1–31 (MEVKTFAFLQIAVFIALGIQIFAAVTAAADA) is a signal peptide. 3 disulfide bridges follow: Cys-41–Cys-63, Cys-45–Cys-65, and Cys-56–Cys-76. Asn-44 carries N-linked (GlcNAc...) asparagine glycosylation. A disordered region spans residues 88–112 (ETPSNSDLEAATPRPRKTLYPVRNP).

The protein resides in the secreted. Its function is as follows. Salivary chemokine-binding protein which binds to host chemokine CXCL1. In Ixodes ricinus (Common tick), this protein is Evasin P1134.